The sequence spans 628 residues: (+)-alpha pinene synthase 1, chloroplastic (628 aa).

Residues aspartate 379, aspartate 383, and aspartate 531 each contribute to the Mg(2+) site. The DDXXD motif motif lies at 379–383 (DDIYD).

It belongs to the terpene synthase family. Tpsd subfamily. Mg(2+) is required as a cofactor. Mn(2+) serves as cofactor.

Its subcellular location is the plastid. It localises to the chloroplast. The catalysed reaction is (2E)-geranyl diphosphate = (1R,5R)-alpha-pinene + diphosphate. Its pathway is terpene metabolism; oleoresin biosynthesis. The protein operates within secondary metabolite biosynthesis; terpenoid biosynthesis. Functionally, monoterpene synthase (TPS) involved in the biosynthesis of monoterpene natural products included in conifer oleoresin secretions and volatile emissions; these compounds contribute to biotic and abiotic stress defense against herbivores and pathogens. Catalyzes the conversion of (2E)-geranyl diphosphate (GPP) to (+)-alpha-pinene. The polypeptide is (+)-alpha pinene synthase 1, chloroplastic (Pinus contorta (Shore pine)).